The sequence spans 280 residues: Acetyl-coenzyme A carboxylase carboxyl transferase subunit beta (280 aa).

Positions 28 to 280 (LFLACPYCGA…IVRLHTAEAE (253 aa)) constitute a CoA carboxyltransferase N-terminal domain. Zn(2+) contacts are provided by C32, C35, C50, and C53. The C4-type zinc finger occupies 32-53 (CPYCGAQMYNKQLGKYRVCAKC).

Belongs to the AccD/PCCB family. As to quaternary structure, acetyl-CoA carboxylase is a heterohexamer composed of biotin carboxyl carrier protein (AccB), biotin carboxylase (AccC) and two subunits each of ACCase subunit alpha (AccA) and ACCase subunit beta (AccD). Zn(2+) is required as a cofactor.

Its subcellular location is the cytoplasm. It catalyses the reaction N(6)-carboxybiotinyl-L-lysyl-[protein] + acetyl-CoA = N(6)-biotinyl-L-lysyl-[protein] + malonyl-CoA. Its pathway is lipid metabolism; malonyl-CoA biosynthesis; malonyl-CoA from acetyl-CoA: step 1/1. Functionally, component of the acetyl coenzyme A carboxylase (ACC) complex. Biotin carboxylase (BC) catalyzes the carboxylation of biotin on its carrier protein (BCCP) and then the CO(2) group is transferred by the transcarboxylase to acetyl-CoA to form malonyl-CoA. The polypeptide is Acetyl-coenzyme A carboxylase carboxyl transferase subunit beta (Leuconostoc mesenteroides subsp. mesenteroides (strain ATCC 8293 / DSM 20343 / BCRC 11652 / CCM 1803 / JCM 6124 / NCDO 523 / NBRC 100496 / NCIMB 8023 / NCTC 12954 / NRRL B-1118 / 37Y)).